The following is a 475-amino-acid chain: Ribulose bisphosphate carboxylase large chain (475 aa).

Positions 1-2 are excised as a propeptide; that stretch reads MS. Position 3 is an N-acetylproline (proline 3). Position 14 is an N6,N6,N6-trimethyllysine (lysine 14). Substrate-binding residues include asparagine 123 and threonine 173. The active-site Proton acceptor is the lysine 175. Residue lysine 177 participates in substrate binding. Mg(2+)-binding residues include lysine 201, aspartate 203, and glutamate 204. An N6-carboxylysine modification is found at lysine 201. The active-site Proton acceptor is histidine 294. The substrate site is built by arginine 295, histidine 327, and serine 379.

This sequence belongs to the RuBisCO large chain family. Type I subfamily. As to quaternary structure, heterohexadecamer of 8 large chains and 8 small chains; disulfide-linked. The disulfide link is formed within the large subunit homodimers. The cofactor is Mg(2+). Post-translationally, the disulfide bond which can form in the large chain dimeric partners within the hexadecamer appears to be associated with oxidative stress and protein turnover.

The protein resides in the plastid. It is found in the chloroplast. It catalyses the reaction 2 (2R)-3-phosphoglycerate + 2 H(+) = D-ribulose 1,5-bisphosphate + CO2 + H2O. The catalysed reaction is D-ribulose 1,5-bisphosphate + O2 = 2-phosphoglycolate + (2R)-3-phosphoglycerate + 2 H(+). Functionally, ruBisCO catalyzes two reactions: the carboxylation of D-ribulose 1,5-bisphosphate, the primary event in carbon dioxide fixation, as well as the oxidative fragmentation of the pentose substrate in the photorespiration process. Both reactions occur simultaneously and in competition at the same active site. In Pinus thunbergii (Japanese black pine), this protein is Ribulose bisphosphate carboxylase large chain.